Reading from the N-terminus, the 264-residue chain is MKAVVLAVAVLFLTGSQARHFWQGDEPQTSWDRMKDFAALYVDAIQESGKDCAAQLDASALGKQLNLNLLANWNTLTSTFNNLREQLGSVTKEFWDNLGEDTVWLRQQMNKDLEEVKQKVQSYLDNFQKKVNEEVERYRDKVQPLGKELHKDAQQKLKELQEKLAPLGQDIRQRAREYVDALRTHLGSYTQGMRQGLAKRLEALKESAPVSEYQVKASKHLKTFSEKAKPALEDLRQGLMPVMESLKASFLSSIDQASKQLSAQ.

The first 18 residues, 1–18, serve as a signal peptide directing secretion; that stretch reads MKAVVLAVAVLFLTGSQA. Tandem repeats lie at residues 67–88 and 89–110. Residues 67–264 form a 10 X approximate tandem repeats region; it reads LNLLANWNTL…DQASKQLSAQ (198 aa). A Methionine sulfoxide modification is found at methionine 109. One copy of the 3; half-length repeat lies at 111-121; that stretch reads KDLEEVKQKVQ. 5 consecutive repeat copies span residues 122–142, 144–165, 166–187, 188–208, and 209–229. Methionine 193 carries the methionine sulfoxide modification. The 9; half-length repeat unit spans residues 230-240; that stretch reads PALEDLRQGLM. Residue methionine 240 is modified to Methionine sulfoxide. Copy 10 of the repeat occupies 241-264; sequence PVMESLKASFLSSIDQASKQLSAQ.

It belongs to the apolipoprotein A1/A4/E family. In terms of assembly, homodimer. Interacts with APOA1BP and CLU. Component of a sperm activating protein complex (SPAP), consisting of APOA1, an immunoglobulin heavy chain, an immunoglobulin light chain and albumin. Interacts with NDRG1. Interacts with SCGB3A2. Interacts with NAXE and YJEFN3. Post-translationally, glycosylated. In terms of processing, palmitoylated. Phosphorylation sites are present in the extracellular medium. In terms of tissue distribution, major protein of plasma HDL, also found in chylomicrons.

It is found in the secreted. Functionally, participates in the reverse transport of cholesterol from tissues to the liver for excretion by promoting cholesterol efflux from tissues and by acting as a cofactor for the lecithin cholesterol acyltransferase (LCAT). As part of the SPAP complex, activates spermatozoa motility. The chain is Apolipoprotein A-I (Apoa1) from Heterocephalus glaber (Naked mole rat).